The following is a 363-amino-acid chain: 3-dehydroquinate synthase (363 aa).

NAD(+)-binding positions include 70 to 75, 104 to 108, 128 to 129, K141, K150, and 168 to 171; these read SGETSK, GVIGD, TT, and TLDT. Positions 183, 245, and 262 each coordinate Zn(2+).

Belongs to the sugar phosphate cyclases superfamily. Dehydroquinate synthase family. Co(2+) serves as cofactor. The cofactor is Zn(2+). NAD(+) is required as a cofactor.

The protein localises to the cytoplasm. It carries out the reaction 7-phospho-2-dehydro-3-deoxy-D-arabino-heptonate = 3-dehydroquinate + phosphate. The protein operates within metabolic intermediate biosynthesis; chorismate biosynthesis; chorismate from D-erythrose 4-phosphate and phosphoenolpyruvate: step 2/7. Its function is as follows. Catalyzes the conversion of 3-deoxy-D-arabino-heptulosonate 7-phosphate (DAHP) to dehydroquinate (DHQ). The sequence is that of 3-dehydroquinate synthase from Alkaliphilus oremlandii (strain OhILAs) (Clostridium oremlandii (strain OhILAs)).